Here is a 342-residue protein sequence, read N- to C-terminus: Biotin synthase (342 aa).

Residues 38–262 (GQVQISTLLS…MMPTSYVRLS (225 aa)) form the Radical SAM core domain. 3 residues coordinate [4Fe-4S] cluster: Cys53, Cys57, and Cys60. The [2Fe-2S] cluster site is built by Cys97, Cys128, Cys188, and Arg260.

This sequence belongs to the radical SAM superfamily. Biotin synthase family. Homodimer. [4Fe-4S] cluster serves as cofactor. The cofactor is [2Fe-2S] cluster.

It carries out the reaction (4R,5S)-dethiobiotin + (sulfur carrier)-SH + 2 reduced [2Fe-2S]-[ferredoxin] + 2 S-adenosyl-L-methionine = (sulfur carrier)-H + biotin + 2 5'-deoxyadenosine + 2 L-methionine + 2 oxidized [2Fe-2S]-[ferredoxin]. Its pathway is cofactor biosynthesis; biotin biosynthesis; biotin from 7,8-diaminononanoate: step 2/2. In terms of biological role, catalyzes the conversion of dethiobiotin (DTB) to biotin by the insertion of a sulfur atom into dethiobiotin via a radical-based mechanism. In Baumannia cicadellinicola subsp. Homalodisca coagulata, this protein is Biotin synthase.